A 223-amino-acid chain; its full sequence is Uridylate kinase (223 aa).

9-10 (GS) is a binding site for ATP. A UMP-binding site is contributed by glycine 42. Glycine 43 and arginine 47 together coordinate ATP. Residues aspartate 64 and 112-118 (VSPGQTT) contribute to the UMP site. ATP-binding residues include threonine 138, tyrosine 144, and aspartate 147.

The protein belongs to the UMP kinase family. As to quaternary structure, homohexamer.

It localises to the cytoplasm. It catalyses the reaction UMP + ATP = UDP + ADP. Its pathway is pyrimidine metabolism; CTP biosynthesis via de novo pathway; UDP from UMP (UMPK route): step 1/1. With respect to regulation, inhibited by UTP. Functionally, catalyzes the reversible phosphorylation of UMP to UDP. This Methanothrix thermoacetophila (strain DSM 6194 / JCM 14653 / NBRC 101360 / PT) (Methanosaeta thermophila) protein is Uridylate kinase.